The chain runs to 156 residues: Endogenous retrovirus group K member 24 Pro protein (156 aa).

Residues 21–96 (FEGLVDTGAD…IPLNLWGRDL (76 aa)) form the Peptidase A2 domain. Residue Asp26 is part of the active site. Residues 111-156 (YSPTSQKIMTKMGYIPGKGLGKNEDGIKIPFEAKINQKREGIGYPF) form the G-patch domain.

It belongs to the peptidase A2 family. HERV class-II K(HML-2) subfamily. As to quaternary structure, active as a homodimer. In terms of processing, autoproteolytically processed at the N-terminus. Expected C-terminal autoprocessing not detected. The sequence shown is that of the processed Pro protein.

The catalysed reaction is Processing at the authentic HIV-1 PR recognition site and release of the mature p17 matrix and the p24 capsid protein, as a result of the cleavage of the -SQNY-|-PIVQ- cleavage site.. In terms of biological role, retroviral proteases have roles in processing of the primary translation products and the maturation of the viral particle. Endogenous Pro proteins may have kept, lost or modified their original function during evolution. This endogenous protein has retained most of the characteristics of retroviral proteases. This chain is Endogenous retrovirus group K member 24 Pro protein (ERVK-24), found in Homo sapiens (Human).